Reading from the N-terminus, the 625-residue chain is Pentatricopeptide repeat-containing protein At2g36980, mitochondrial (625 aa).

A mitochondrion-targeting transit peptide spans 1 to 7 (MSVLVRL). PPR repeat units follow at residues 3 to 33 (VLVR…MPEL), 34 to 68 (DTVA…DAKP), 69 to 103 (DDYS…GFCA), 104 to 134 (SLPV…MCCD), 137 to 167 (NEVT…MPKR), 168 to 202 (VAFA…EFKP), 203 to 238 (DCYT…GWSS), 239 to 269 (AVEA…IEVL), 270 to 300 (TQVS…APEK), 301 to 335 (NIVT…GVDS), 336 to 370 (DHFA…GFQG), 371 to 401 (YAYV…IANK), 402 to 436 (DLVS…GIKP), 437 to 471 (DNVT…YRIP), and 473 to 503 (EVDH…YSSL). The interval 512–587 (SWETLLGACS…TPGCSWIEVG (76 aa)) is type E motif. The interval 588 to 618 (NQVSTFVVGDSSHPRLEELSETLNCLQHEMR) is type E(+) motif.

This sequence belongs to the PPR family. PCMP-E subfamily.

The protein localises to the mitochondrion. The protein is Pentatricopeptide repeat-containing protein At2g36980, mitochondrial (PCMP-E73) of Arabidopsis thaliana (Mouse-ear cress).